The following is a 512-amino-acid chain: Inositol-3-phosphate synthase (512 aa).

NAD(+) contacts are provided by glycine 72, glycine 73, asparagine 74, asparagine 75, aspartate 145, isoleucine 182, glutamine 192, arginine 195, threonine 232, glycine 233, asparagine 234, threonine 235, glycine 283, serine 284, aspartate 308, serine 311, asparagine 342, asparagine 343, aspartate 344, lysine 357, glycine 395, aspartate 396, aspartate 424, and serine 425.

It belongs to the myo-inositol 1-phosphate synthase family. The cofactor is NAD(+).

It localises to the cytoplasm. It is found in the cytosol. The protein localises to the nucleus. The enzyme catalyses D-glucose 6-phosphate = 1D-myo-inositol 3-phosphate. It functions in the pathway polyol metabolism; myo-inositol biosynthesis; myo-inositol from D-glucose 6-phosphate: step 1/2. Its function is as follows. Key enzyme in myo-inositol biosynthesis pathway that catalyzes the conversion of glucose 6-phosphate to 1-myo-inositol 1-phosphate in a NAD-dependent manner. The chain is Inositol-3-phosphate synthase from Mesembryanthemum crystallinum (Common ice plant).